The primary structure comprises 180 residues: Ribulose bisphosphate carboxylase small subunit, chloroplastic 4 (180 aa).

A chloroplast-targeting transit peptide spans 1–56; the sequence is MASSIVSSAAVATRANGAQASMVGPFTGLKSTASFPVSRKQNLDITSIASNGGRVR.

Belongs to the RuBisCO small chain family. Heterohexadecamer of 8 large and 8 small subunits.

It is found in the plastid. The protein localises to the chloroplast. Functionally, ruBisCO catalyzes two reactions: the carboxylation of D-ribulose 1,5-bisphosphate, the primary event in carbon dioxide fixation, as well as the oxidative fragmentation of the pentose substrate. Both reactions occur simultaneously and in competition at the same active site. Although the small subunit is not catalytic it is essential for maximal activity. This Solanum tuberosum (Potato) protein is Ribulose bisphosphate carboxylase small subunit, chloroplastic 4.